A 1068-amino-acid polypeptide reads, in one-letter code: Phosphatidylinositol 4,5-bisphosphate 3-kinase catalytic subunit alpha isoform (1068 aa).

Residues 16-105 (MPPRILVECL…QPFLKVIEPV (90 aa)) form the PI3K-ABD domain. The 103-residue stretch at 187–289 (KGQIIVVIWV…GRMPNLMLMA (103 aa)) folds into the PI3K-RBD domain. In terms of domain architecture, C2 PI3K-type spans 330-487 (INSALRIKIL…DWFSSVVKFP (158 aa)). A PIK helical domain is found at 517-694 (LARDNELREN…GLLLESYCRA (178 aa)). The 287-residue stretch at 765–1051 (RLEECRIMSS…QMNDAHHGGW (287 aa)) folds into the PI3K/PI4K catalytic domain. Residues 771–777 (IMSSAKR) form a G-loop region. The catalytic loop stretch occupies residues 912–920 (GIGDRHNSN). The segment at 931 to 957 (HIDFGHFLDHKKKKFGYKRERVPFVLT) is activation loop.

Belongs to the PI3/PI4-kinase family. As to quaternary structure, heterodimer of a catalytic subunit PIK3CA and a p85 regulatory subunit (PIK3R1, PIK3R2 or PIK3R3). Interacts with IRS1 in nuclear extracts. Interacts with RUFY3. Interacts with RASD2. Interacts with APPL1. Interacts with HRAS and KRAS. Interaction with HRAS/KRAS is required for PI3K pathway signaling and cell proliferation stimulated by EGF and FGF2. Interacts with FAM83B; activates the PI3K/AKT signaling cascade.

It carries out the reaction L-seryl-[protein] + ATP = O-phospho-L-seryl-[protein] + ADP + H(+). The enzyme catalyses a 1,2-diacyl-sn-glycero-3-phospho-(1D-myo-inositol) + ATP = a 1,2-diacyl-sn-glycero-3-phospho-(1D-myo-inositol-3-phosphate) + ADP + H(+). The catalysed reaction is a 1,2-diacyl-sn-glycero-3-phospho-(1D-myo-inositol-4,5-bisphosphate) + ATP = a 1,2-diacyl-sn-glycero-3-phospho-(1D-myo-inositol-3,4,5-trisphosphate) + ADP + H(+). It catalyses the reaction 1,2-dioctanoyl-sn-glycero-3-phospho-(1D-myo-inositol-4,5-bisphosphate) + ATP = 1,2-dioctanoyl-sn-glycero-3-phospho-(1D-myo-inositol-3,4,5-trisphosphate) + ADP + H(+). It carries out the reaction 1-octadecanoyl-2-(5Z,8Z,11Z,14Z)-eicosatetraenoyl-sn-glycero-3-phospho-1D-myo-inositol 4,5-bisphosphate + ATP = 1-octadecanoyl-2-(5Z,8Z,11Z,14Z-eicosatetraenoyl)-sn-glycero-3-phospho-(1D-myo-inositol 3,4,5-triphosphate) + ADP + H(+). It functions in the pathway phospholipid metabolism; phosphatidylinositol phosphate biosynthesis. Its function is as follows. Phosphoinositide-3-kinase (PI3K) phosphorylates phosphatidylinositol (PI) and its phosphorylated derivatives at position 3 of the inositol ring to produce 3-phosphoinositides. Uses ATP and PtdIns(4,5)P2 (phosphatidylinositol 4,5-bisphosphate) to generate phosphatidylinositol 3,4,5-trisphosphate (PIP3). PIP3 plays a key role by recruiting PH domain-containing proteins to the membrane, including AKT1 and PDPK1, activating signaling cascades involved in cell growth, survival, proliferation, motility and morphology. Participates in cellular signaling in response to various growth factors. Involved in the activation of AKT1 upon stimulation by receptor tyrosine kinases ligands such as EGF, insulin, IGF1, VEGFA and PDGF. Involved in signaling via insulin-receptor substrate (IRS) proteins. Essential in endothelial cell migration during vascular development through VEGFA signaling, possibly by regulating RhoA activity. Required for lymphatic vasculature development, possibly by binding to RAS and by activation by EGF and FGF2, but not by PDGF. Regulates invadopodia formation through the PDPK1-AKT1 pathway. Participates in cardiomyogenesis in embryonic stem cells through a AKT1 pathway. Participates in vasculogenesis in embryonic stem cells through PDK1 and protein kinase C pathway. In addition to its lipid kinase activity, it displays a serine-protein kinase activity that results in the autophosphorylation of the p85alpha regulatory subunit as well as phosphorylation of other proteins such as 4EBP1, H-Ras, the IL-3 beta c receptor and possibly others. Plays a role in the positive regulation of phagocytosis and pinocytosis. This chain is Phosphatidylinositol 4,5-bisphosphate 3-kinase catalytic subunit alpha isoform (PIK3CA), found in Bos taurus (Bovine).